Reading from the N-terminus, the 212-residue chain is MAYAYLFKYIIIGDTGVGKSCLLLQFTDKRFQPVHDLTIGVEFGARMITIDGKQIKLQIWDTAGQESFRSITRSYYRGAAGALLVYDITRRDTFNHLTTWLEDARQHSNSNMVIMLIGNKSDLESRREVKKEEGEAFAREHGLIFMETSAKTASNVEEAFINTAKEIYEKIQEGVFDINNEANGIKIGPQHAATNATLAGNQGGQQAGGGCC.

Residues G16, V17, G18, K19, S20, C21, and T38 each contribute to the GTP site. Residue S20 coordinates Mg(2+). The Switch 1 signature appears at 37–42 (LTIGVE). Residues T38 and D61 each coordinate Mg(2+). A Switch 2 motif is present at residues 63–72 (AGQESFRSIT). G64, N119, K120, D122, A150, and K151 together coordinate GTP. S-geranylgeranyl cysteine attachment occurs at residues C211 and C212.

The protein belongs to the small GTPase superfamily. Rab family. As to quaternary structure, interacts with PRKCI. Interacts with TRIP11. Interacts (in GTP-bound form) with GARIN1B. The cofactor is Mg(2+). Post-translationally, prenylated. Prenylation is required for association with cellular membranes.

It localises to the endoplasmic reticulum-Golgi intermediate compartment membrane. Its subcellular location is the melanosome. It is found in the endoplasmic reticulum membrane. The protein resides in the golgi apparatus membrane. The protein localises to the cytoplasmic vesicle. It localises to the secretory vesicle. Its subcellular location is the acrosome. The enzyme catalyses GTP + H2O = GDP + phosphate + H(+). With respect to regulation, regulated by guanine nucleotide exchange factors (GEFs) which promote the exchange of bound GDP for free GTP, GTPase activating proteins (GAPs) which increase the GTP hydrolysis activity, and GDP dissociation inhibitors (GDIs) which inhibit the dissociation of the nucleotide from the GTPase. Its function is as follows. The small GTPases Rab are key regulators of intracellular membrane trafficking, from the formation of transport vesicles to their fusion with membranes. Rabs cycle between active GTP-bound and inactive GDP-bound states. In their active state, drive transport of vesicular carriers from donor organelles to acceptor organelles to regulate the membrane traffic that maintains organelle identity and morphology. RAB2A regulates autophagy by promoting autophagosome-lysosome fusion via recruitment of the HOPS endosomal tethering complex; this process involves autophagosomal RAB2A and lysosomal RAB39A recruitment of HOPS subcomplexes VPS39-VPS11 and VPS41-VPS16-VPS18-VPS33A, respectively, which assemble into a functional complex to mediate membrane tethering and SNAREs-driven membrane fusion. Required for protein transport from the endoplasmic reticulum to the Golgi complex. Regulates the compacted morphology of the Golgi. Together with RAB2B, redundantly required for efficient autophagic flux. The polypeptide is Ras-related protein Rab-2A (RAB2A) (Gallus gallus (Chicken)).